Here is a 37-residue protein sequence, read N- to C-terminus: Large ribosomal subunit protein bL36A (37 aa).

This sequence belongs to the bacterial ribosomal protein bL36 family.

The protein is Large ribosomal subunit protein bL36A of Methylobacillus flagellatus (strain ATCC 51484 / DSM 6875 / VKM B-1610 / KT).